A 152-amino-acid polypeptide reads, in one-letter code: Transcriptional repressor NrdR (152 aa).

A zinc finger spans residues 3–34 (CPHCHHNGSRVIDSRPAEDGMSIRRRRECVNC). Residues 49–139 (LLVVKKDGTR…VYRQFKDVDA (91 aa)) enclose the ATP-cone domain.

It belongs to the NrdR family. It depends on Zn(2+) as a cofactor.

Negatively regulates transcription of bacterial ribonucleotide reductase nrd genes and operons by binding to NrdR-boxes. The sequence is that of Transcriptional repressor NrdR from Limosilactobacillus fermentum (strain NBRC 3956 / LMG 18251) (Lactobacillus fermentum).